A 459-amino-acid polypeptide reads, in one-letter code: Smoothelin-like protein 1 (459 aa).

Polar residues predominate over residues 1-27 (MEQTEGNSSEDGTTVSPTAGNLETPGS). Residues 1–314 (MEQTEGNSSE…RPRGPRAQNR (314 aa)) form a disordered region. Composition is skewed to basic and acidic residues over residues 42-55 (SDKEGPSDWAEHLC), 75-105 (DELKTDLQGEARGKDEAQGDLAEEKVGKEDT), 112-168 (DTGK…KEDA), 185-211 (ADVKDQAKPELPEVDGKETGSDTKELV), and 221-232 (EQGKENESEERA). A coiled-coil region spans residues 124–154 (NEVREKEEAMLASEKQKVDEKETNLESKEKS). Residues 260–283 (PESTGETSPSASESSPSEVPGSPT) show a composition bias toward low complexity. Basic and acidic residues predominate over residues 287-300 (PSEKKKDRAPERRV). Ser-301 carries the phosphoserine; by PKA and PKG modification. The Calponin-homology (CH) domain occupies 343–449 (GGVKNMLLEW…YIQELYRSLV (107 aa)). A calmodulin-binding region spans residues 441-459 (IQELYRSLVQKGLVKTKKK).

The protein belongs to the smoothelin family. Interacts with PPP1R12A. In terms of processing, maximal phosphorylation of Ser-301 correlates with maximal relaxation of aorta in response to acetylcholine. In terms of tissue distribution, widely expressed, with highest expression in skeletal muscles (at protein level). Within striated muscles, significantly more expressed in soleus muscle compared with plantaris muscle or white vastus (at protein level). 30-40% lower expression in females than in males (at protein level). Expressed in type 2a fibers, but not detected in fast twitch type 2b muscle white vastus nor in oxidative type I/b heart muscle (at protein level). Expressed within myometrial cells of the uterus, as well as in the endometrial layer. In the aorta, confined to smooth muscle cells. Not detected in endothelial cells.

It is found in the cytoplasm. Its subcellular location is the myofibril. The protein localises to the sarcomere. It localises to the i band. The protein resides in the m line. It is found in the nucleus. Plays a role in the regulation of contractile properties of both striated and smooth muscles. When unphosphorylated, may inhibit myosin dephosphorylation. Phosphorylation at Ser-301 reduces this inhibitory activity. This is Smoothelin-like protein 1 (Smtnl1) from Mus musculus (Mouse).